Here is a 297-residue protein sequence, read N- to C-terminus: tRNA pseudouridine synthase B (297 aa).

Aspartate 44 acts as the Nucleophile in catalysis.

Belongs to the pseudouridine synthase TruB family. Type 1 subfamily.

The catalysed reaction is uridine(55) in tRNA = pseudouridine(55) in tRNA. Responsible for synthesis of pseudouridine from uracil-55 in the psi GC loop of transfer RNAs. This Corynebacterium glutamicum (strain ATCC 13032 / DSM 20300 / JCM 1318 / BCRC 11384 / CCUG 27702 / LMG 3730 / NBRC 12168 / NCIMB 10025 / NRRL B-2784 / 534) protein is tRNA pseudouridine synthase B.